Here is a 936-residue protein sequence, read N- to C-terminus: Phosphoenolpyruvate carboxylase (936 aa).

The tract at residues 1–20 (MSSLNLSAGPEPVSERPDDA) is disordered. Catalysis depends on residues histidine 164 and lysine 598.

The protein belongs to the PEPCase type 1 family. Mg(2+) serves as cofactor.

It catalyses the reaction oxaloacetate + phosphate = phosphoenolpyruvate + hydrogencarbonate. In terms of biological role, forms oxaloacetate, a four-carbon dicarboxylic acid source for the tricarboxylic acid cycle. In Rhodopseudomonas palustris (strain ATCC BAA-98 / CGA009), this protein is Phosphoenolpyruvate carboxylase (ppc).